The primary structure comprises 222 residues: Peroxiredoxin (222 aa).

The Thioredoxin domain occupies 2–157; the sequence is VVLGQKFPEV…ILRLVEALQT (156 aa). Cys-44 (cysteine sulfenic acid (-SOH) intermediate) is an active-site residue. Arg-120 lines the substrate pocket. A disulfide bond links Cys-211 and Cys-217.

The protein belongs to the peroxiredoxin family. Prx6 subfamily. As to quaternary structure, homodecamer. Pentamer of dimers that assemble into a ring structure.

The protein localises to the cytoplasm. It catalyses the reaction a hydroperoxide + [thioredoxin]-dithiol = an alcohol + [thioredoxin]-disulfide + H2O. Its function is as follows. Thiol-specific peroxidase that catalyzes the reduction of hydrogen peroxide and organic hydroperoxides to water and alcohols, respectively. Plays a role in cell protection against oxidative stress by detoxifying peroxides. The chain is Peroxiredoxin from Nanoarchaeum equitans (strain Kin4-M).